A 456-amino-acid chain; its full sequence is tRNA modification GTPase MnmE (456 aa).

Residues R24, E81, and K120 each contribute to the (6S)-5-formyl-5,6,7,8-tetrahydrofolate site. One can recognise a TrmE-type G domain in the interval 216-379; that stretch reads GMTVVIAGRP…LRDHLKACMG (164 aa). N226 lines the K(+) pocket. Residues 226 to 231, 245 to 251, 270 to 273, and 335 to 338 contribute to the GTP site; these read NAGKSS, TAIAGTT, DTAG, and NKAD. A Mg(2+)-binding site is contributed by S230. Residues T245, I247, and T250 each contribute to the K(+) site. Residue T251 coordinates Mg(2+). Residue K456 coordinates (6S)-5-formyl-5,6,7,8-tetrahydrofolate.

The protein belongs to the TRAFAC class TrmE-Era-EngA-EngB-Septin-like GTPase superfamily. TrmE GTPase family. In terms of assembly, homodimer. Heterotetramer of two MnmE and two MnmG subunits. The cofactor is K(+).

It is found in the cytoplasm. Functionally, exhibits a very high intrinsic GTPase hydrolysis rate. Involved in the addition of a carboxymethylaminomethyl (cmnm) group at the wobble position (U34) of certain tRNAs, forming tRNA-cmnm(5)s(2)U34. This chain is tRNA modification GTPase MnmE, found in Pseudomonas putida (strain W619).